A 185-amino-acid polypeptide reads, in one-letter code: Large ribosomal subunit protein uL5 (185 aa).

It belongs to the universal ribosomal protein uL5 family. As to quaternary structure, part of the 50S ribosomal subunit; part of the 5S rRNA/L5/L18/L25 subcomplex. Contacts the 5S rRNA and the P site tRNA. Forms a bridge to the 30S subunit in the 70S ribosome.

Functionally, this is one of the proteins that bind and probably mediate the attachment of the 5S RNA into the large ribosomal subunit, where it forms part of the central protuberance. In the 70S ribosome it contacts protein S13 of the 30S subunit (bridge B1b), connecting the 2 subunits; this bridge is implicated in subunit movement. Contacts the P site tRNA; the 5S rRNA and some of its associated proteins might help stabilize positioning of ribosome-bound tRNAs. The polypeptide is Large ribosomal subunit protein uL5 (Bartonella quintana (strain Toulouse) (Rochalimaea quintana)).